A 136-amino-acid polypeptide reads, in one-letter code: MAEECPRACAEPVAPKATAPPERTSDYYRVSADLPGRFNNPGWFRGYRTQKAVSVYRTSNQAYGSRAPTVHEMPKVFYPNSNKFSQQLAAGGMFRNNTLNVYLEKSIVTGPDNCITSCDRLNFHPSYNINRPSICD.

Residues 1-24 are disordered; it reads MAEECPRACAEPVAPKATAPPERT.

It belongs to the PIERCE1 family. In terms of assembly, microtubule inner protein component of sperm flagellar doublet microtubules. Interacts with CFAP53, ODAD1 and ODAD3; the interactions link the outer dynein arms docking complex (ODA-DC) to the internal microtubule inner proteins (MIP) in cilium axoneme. In terms of tissue distribution, expressed in airway epithelial cells.

Its subcellular location is the cytoplasm. It is found in the cytoskeleton. The protein resides in the cilium axoneme. The protein localises to the flagellum axoneme. In terms of biological role, microtubule inner protein involved in the attachment of outer dynein arms (ODAs) to dynein-decorated doublet microtubules (DMTs) in cilia axoneme, which is required for motile cilia beating. Functions at the initial step of left-right asymmetry specification of the visceral organs. In Homo sapiens (Human), this protein is Piercer of microtubule wall 1 protein.